A 247-amino-acid chain; its full sequence is Membrane-embedded CAAX protease MroQ (247 aa).

A signal peptide spans 1–17; it reads MTRLWASLLTVIIYILS. The next 3 helical transmembrane spans lie at 42-62, 81-101, and 119-139; these read VIYI…LINL, IIPW…VVSI, and LIII…IGPL. The active site involves Glu-141. The next 2 membrane-spanning stretches (helical) occupy residues 162 to 182 and 183 to 203; these read IVAF…AHND and FKFI…YVWT.

The protein belongs to the peptidase U48 family.

The protein resides in the membrane. Participates in the regulation of the Agr quorum sensing activity and plays thereby an important role in virulence. Mechanistically, elicits a protease dependent control of Agr activity without playing a role in the processing of the pheromone-precursor AgrD. The polypeptide is Membrane-embedded CAAX protease MroQ (mroQ) (Staphylococcus aureus (strain USA300)).